A 206-amino-acid polypeptide reads, in one-letter code: Large ribosomal subunit protein uL4 (206 aa).

It belongs to the universal ribosomal protein uL4 family. Part of the 50S ribosomal subunit.

One of the primary rRNA binding proteins, this protein initially binds near the 5'-end of the 23S rRNA. It is important during the early stages of 50S assembly. It makes multiple contacts with different domains of the 23S rRNA in the assembled 50S subunit and ribosome. In terms of biological role, forms part of the polypeptide exit tunnel. The polypeptide is Large ribosomal subunit protein uL4 (Methylocella silvestris (strain DSM 15510 / CIP 108128 / LMG 27833 / NCIMB 13906 / BL2)).